The chain runs to 918 residues: Dual serine/threonine and tyrosine protein kinase (918 aa).

A compositionally biased stretch (basic and acidic residues) spans 1-19 (MQKDGTRSSRRMEEGDRRN). A disordered region spans residues 1 to 29 (MQKDGTRSSRRMEEGDRRNGSTGSSGSVS). In terms of domain architecture, Protein kinase spans 643–897 (PRIGRELGRG…PLMGIVQPML (255 aa)). ATP contacts are provided by residues 649–657 (LGRGQYGVV) and lysine 672. Aspartate 768 serves as the catalytic Proton acceptor.

The protein belongs to the protein kinase superfamily. Ser/Thr protein kinase family.

It localises to the cytoplasm. The protein localises to the cell membrane. It is found in the apical cell membrane. The protein resides in the basolateral cell membrane. Its subcellular location is the cell junction. The catalysed reaction is L-seryl-[protein] + ATP = O-phospho-L-seryl-[protein] + ADP + H(+). It carries out the reaction L-threonyl-[protein] + ATP = O-phospho-L-threonyl-[protein] + ADP + H(+). It catalyses the reaction L-tyrosyl-[protein] + ATP = O-phospho-L-tyrosyl-[protein] + ADP + H(+). In terms of biological role, may act as a positive regulator of ERK phosphorylation downstream of fibroblast growth factor-receptor activation. May induce both caspase-dependent apoptosis and caspase-independent cell death. May play a role in the embryonic development. In Xenopus tropicalis (Western clawed frog), this protein is Dual serine/threonine and tyrosine protein kinase (dstyk).